A 424-amino-acid polypeptide reads, in one-letter code: Hemagglutinin-esterase (424 aa).

Positions 1–16 are cleaved as a signal peptide; that stretch reads MFLLPRFCLVCSIIST. Positions 7–127 are esterase domain 1; sequence FCLVCSIIST…NNDIWMQNKG (121 aa). Topologically, residues 17–392 are virion surface; sequence FGFQNPPTNV…PICVYDPLPI (376 aa). Ser40 serves as the catalytic Nucleophile. Cys44 and Cys65 are joined by a disulfide. N-linked (GlcNAc...) asparagine; by host glycans are attached at residues Asn54, Asn89, Asn153, Asn236, and Asn301. Disulfide bonds link Cys113/Cys162, Cys197/Cys276, and Cys205/Cys249. Residues 128–266 form a receptor binding region; the sequence is LFYTQVYKKM…GNYLAISNEL (139 aa). The segment at 267 to 379 is esterase domain 2; sequence LLTVPTKAIC…NCPTAASIIS (113 aa). An intrachain disulfide couples Cys307 to Cys312. The N-linked (GlcNAc...) asparagine; by host glycan is linked to Asn316. Catalysis depends on charge relay system residues Asp326 and His329. Cys347 and Cys371 are disulfide-bonded. Asn358 carries an N-linked (GlcNAc...) asparagine; by host glycan. The chain crosses the membrane as a helical span at residues 393 to 413; that stretch reads ILLGILLGVAVIVIVVLLLYF. At 414 to 424 the chain is on the intravirion side; it reads MVDNGIRQHYA.

The protein belongs to the influenza type C/coronaviruses hemagglutinin-esterase family. Homodimer; disulfide-linked. Forms a complex with the M protein in the pre-Golgi. Associates then with S-M complex to form a ternary complex S-M-HE. Post-translationally, N-glycosylated in the host RER.

It localises to the virion membrane. The protein resides in the host cell membrane. It catalyses the reaction N-acetyl-9-O-acetylneuraminate + H2O = N-acetylneuraminate + acetate + H(+). It carries out the reaction N-acetyl-4-O-acetylneuraminate + H2O = N-acetylneuraminate + acetate + H(+). Structural protein that makes short spikes at the surface of the virus. Contains receptor binding and receptor-destroying activities. Mediates de-O-acetylation of N-acetyl-4-O-acetylneuraminic acid, which is probably the receptor determinant recognized by the virus on the surface of erythrocytes and susceptible cells. This receptor-destroying activity is important for virus release as it probably helps preventing self-aggregation and ensures the efficient spread of the progeny virus from cell to cell. May serve as a secondary viral attachment protein for initiating infection, the spike protein being the major one. May become a target for both the humoral and the cellular branches of the immune system. This Sus scrofa (Pig) protein is Hemagglutinin-esterase.